The primary structure comprises 170 residues: Macro domain-containing protein VPA0103 (170 aa).

Residues 1-170 (MNAISLVQGD…SIWQHALTQH (170 aa)) enclose the Macro domain.

This sequence belongs to the MacroD-type family.

This is Macro domain-containing protein VPA0103 from Vibrio parahaemolyticus serotype O3:K6 (strain RIMD 2210633).